Consider the following 192-residue polypeptide: uncharacterized protein (192 aa).

Residues 29-160 form the Nudix hydrolase domain; that stretch reads RRQAAVLIPL…PLDIQRRGHD (132 aa). A Nudix box motif is present at residues 67–89; it reads GAVDSTDASLIAAALREAHEEVA. Mg(2+)-binding residues include Glu-83 and Glu-87.

It belongs to the Nudix hydrolase family. PCD1 subfamily. It depends on Mn(2+) as a cofactor. Mg(2+) serves as cofactor.

Functionally, probably mediates the hydrolysis of some nucleoside diphosphate derivatives. This is an uncharacterized protein from Enterobacter sp. (strain 638).